Here is a 371-residue protein sequence, read N- to C-terminus: Aminomethyltransferase (371 aa).

The protein belongs to the GcvT family. In terms of assembly, the glycine cleavage system is composed of four proteins: P, T, L and H.

The catalysed reaction is N(6)-[(R)-S(8)-aminomethyldihydrolipoyl]-L-lysyl-[protein] + (6S)-5,6,7,8-tetrahydrofolate = N(6)-[(R)-dihydrolipoyl]-L-lysyl-[protein] + (6R)-5,10-methylene-5,6,7,8-tetrahydrofolate + NH4(+). Functionally, the glycine cleavage system catalyzes the degradation of glycine. This chain is Aminomethyltransferase, found in Pectobacterium carotovorum subsp. carotovorum (strain PC1).